A 274-amino-acid chain; its full sequence is Small ribosomal subunit protein uS2 (274 aa).

Residues 255-274 (AEAESEDKGEVLYSFDDEEE) form a disordered region.

Belongs to the universal ribosomal protein uS2 family.

The protein is Small ribosomal subunit protein uS2 of Gloeobacter violaceus (strain ATCC 29082 / PCC 7421).